A 399-amino-acid polypeptide reads, in one-letter code: Tyrosine--tRNA ligase (399 aa).

Positions 42–51 match the 'HIGH' region motif; it reads PTAPDLHLGH. Positions 226–230 match the 'KMSKS' region motif; sequence KMSKS. ATP is bound at residue Lys-229. In terms of domain architecture, S4 RNA-binding spans 337 to 398; it reads IAIANLLKDA…GKRKFARITV (62 aa).

It belongs to the class-I aminoacyl-tRNA synthetase family. TyrS type 2 subfamily. Homodimer.

Its subcellular location is the cytoplasm. It carries out the reaction tRNA(Tyr) + L-tyrosine + ATP = L-tyrosyl-tRNA(Tyr) + AMP + diphosphate + H(+). Its function is as follows. Catalyzes the attachment of tyrosine to tRNA(Tyr) in a two-step reaction: tyrosine is first activated by ATP to form Tyr-AMP and then transferred to the acceptor end of tRNA(Tyr). In Colwellia psychrerythraea (strain 34H / ATCC BAA-681) (Vibrio psychroerythus), this protein is Tyrosine--tRNA ligase.